We begin with the raw amino-acid sequence, 230 residues long: Ribosomal RNA small subunit methyltransferase Nep1 (230 aa).

Residues Gly184, Gly189, and 205 to 210 contribute to the S-adenosyl-L-methionine site; that span reads IYNKPL.

It belongs to the class IV-like SAM-binding methyltransferase superfamily. RNA methyltransferase NEP1 family. Homodimer.

The catalysed reaction is a pseudouridine in rRNA + S-adenosyl-L-methionine = an N(1)-methylpseudouridine in rRNA + S-adenosyl-L-homocysteine + H(+). Its function is as follows. Methyltransferase involved in ribosomal biogenesis. Specifically catalyzes the N1-methylation of the pseudouridine corresponding to position 914 in M.jannaschii 16S rRNA. The protein is Ribosomal RNA small subunit methyltransferase Nep1 of Staphylothermus marinus (strain ATCC 43588 / DSM 3639 / JCM 9404 / F1).